Consider the following 199-residue polypeptide: Peptidyl-tRNA hydrolase (199 aa).

Tyr-15 provides a ligand contact to tRNA. His-20 functions as the Proton acceptor in the catalytic mechanism. TRNA contacts are provided by Tyr-66, Asn-68, and Asn-114.

The protein belongs to the PTH family. As to quaternary structure, monomer.

The protein localises to the cytoplasm. The catalysed reaction is an N-acyl-L-alpha-aminoacyl-tRNA + H2O = an N-acyl-L-amino acid + a tRNA + H(+). Functionally, hydrolyzes ribosome-free peptidyl-tRNAs (with 1 or more amino acids incorporated), which drop off the ribosome during protein synthesis, or as a result of ribosome stalling. Its function is as follows. Catalyzes the release of premature peptidyl moieties from peptidyl-tRNA molecules trapped in stalled 50S ribosomal subunits, and thus maintains levels of free tRNAs and 50S ribosomes. This Burkholderia cenocepacia (strain ATCC BAA-245 / DSM 16553 / LMG 16656 / NCTC 13227 / J2315 / CF5610) (Burkholderia cepacia (strain J2315)) protein is Peptidyl-tRNA hydrolase.